Consider the following 298-residue polypeptide: ATP-dependent Clp protease proteolytic subunit 5, chloroplastic (298 aa).

The N-terminal 100 residues, 1-100, are a transit peptide targeting the chloroplast; the sequence is MAHACVSTSA…SSPYFPAYAQ (100 aa). G101 bears the N-acetylglycine mark. The Nucleophile role is filled by S193. H218 is a catalytic residue.

Belongs to the peptidase S14 family. As to quaternary structure, component of the chloroplastic Clp protease core complex which consist of at least 16 proteins: CLPP4 (3 copies), CLPP5 (3 copies), CLPR4 (2 copies), ClpP1 (1 copy), CLPP6 (1 copy), CLPR2 (1 copy), CLPT1 (1 copy), CLPT2 (1 copy) and 3 copies of CLPP3 and/or CLPR1 and/or CLPR3. The core complex is organized in two heptameric rings, one containing CLPP3,4,5,6 in a 1:2:3:1 ratio and the other CLPP1 and CLPR1,2,3,4 in a 3:1:1:1:1 ratio. Interacts with CHIP. In terms of processing, ubiquitinated in vitro by CHIP. In terms of tissue distribution, mostly expressed in leaves. Also detected in stems, and to a lower extent, in roots (at protein level).

It localises to the plastid. The protein localises to the chloroplast stroma. The enzyme catalyses Hydrolysis of proteins to small peptides in the presence of ATP and magnesium. alpha-casein is the usual test substrate. In the absence of ATP, only oligopeptides shorter than five residues are hydrolyzed (such as succinyl-Leu-Tyr-|-NHMec, and Leu-Tyr-Leu-|-Tyr-Trp, in which cleavage of the -Tyr-|-Leu- and -Tyr-|-Trp bonds also occurs).. In terms of biological role, cleaves peptides in various proteins in a process that requires ATP hydrolysis. Has a chymotrypsin-like activity. Plays a major role in the degradation of misfolded proteins. This is ATP-dependent Clp protease proteolytic subunit 5, chloroplastic from Arabidopsis thaliana (Mouse-ear cress).